Consider the following 459-residue polypeptide: tRNA-guanine(15) transglycosylase (459 aa).

Residue Asp90 is the Nucleophile of the active site. Positions 125 and 192 each coordinate substrate. Residues Cys275, Cys277, and Cys280 each coordinate Zn(2+).

This sequence belongs to the archaeosine tRNA-ribosyltransferase family. The cofactor is Zn(2+).

It catalyses the reaction guanosine(15) in tRNA + 7-cyano-7-deazaguanine = 7-cyano-7-carbaguanosine(15) in tRNA + guanine. Its pathway is tRNA modification; archaeosine-tRNA biosynthesis. Functionally, exchanges the guanine residue with 7-cyano-7-deazaguanine (preQ0) at position 15 in the dihydrouridine loop (D-loop) of archaeal tRNAs. This chain is tRNA-guanine(15) transglycosylase, found in Methanopyrus kandleri (strain AV19 / DSM 6324 / JCM 9639 / NBRC 100938).